The sequence spans 290 residues: Protein-glutamine deamidase Cif (290 aa).

The segment at 1–26 (MKISPNTISPSQSDPRMSTNVSQRSR) is disordered. Catalysis depends on residues Cys117, His173, and Gln193.

This sequence belongs to the Cif family.

Its subcellular location is the secreted. The protein localises to the host nucleus. The catalysed reaction is L-glutaminyl-[protein] + H2O = L-glutamyl-[protein] + NH4(+). Protein-glutamine deamidase effector that inhibits the host cell cycle and other key cellular processes such as the actin network and programmed-cell death. Acts by mediating the side chain deamidation of 'Gln-40' of host NEDD8, converting it to glutamate, thereby abolishing the activity of cullin-RING-based E3 ubiquitin-protein ligase complexes (CRL complexes). Inactivation of CRL complexes prevents ubiquitination and subsequent degradation of the cyclin-dependent kinase inhibitors CDKN1A/p21 and CDKN1B/p27, leading to G1 and G2 cell cycle arrests in host cells. Also able to catalyze deamidation of 'Gln-40' of host ubiquitin in vitro; however, NEDD8 constitutes the preferred substrate in vivo. In Yersinia pseudotuberculosis serotype O:3 (strain YPIII), this protein is Protein-glutamine deamidase Cif.